Here is a 147-residue protein sequence, read N- to C-terminus: Succinate dehydrogenase assembly factor 2, mitochondrial (147 aa).

It belongs to the SDHAF2 family. Interacts with the flavoprotein subunit within the SDH catalytic dimer.

It is found in the mitochondrion matrix. Plays an essential role in the assembly of succinate dehydrogenase (SDH), an enzyme complex (also referred to as respiratory complex II) that is a component of both the tricarboxylic acid (TCA) cycle and the mitochondrial electron transport chain, and which couples the oxidation of succinate to fumarate with the reduction of ubiquinone (coenzyme Q) to ubiquinol. Required for flavinylation (covalent attachment of FAD) of the flavoprotein subunit of the SDH catalytic dimer. This Drosophila grimshawi (Hawaiian fruit fly) protein is Succinate dehydrogenase assembly factor 2, mitochondrial.